Reading from the N-terminus, the 104-residue chain is UPF0145 protein VNG_2432C (104 aa).

It belongs to the UPF0145 family.

The sequence is that of UPF0145 protein VNG_2432C from Halobacterium salinarum (strain ATCC 700922 / JCM 11081 / NRC-1) (Halobacterium halobium).